A 209-amino-acid polypeptide reads, in one-letter code: uncharacterized protein (209 aa).

Residues 177–209 form a disordered region; it reads DNSDNSSDSDDSDSLDGSDDLNDSDNVDNLFVG. Over residues 183–202 the composition is skewed to acidic residues; it reads SDSDDSDSLDGSDDLNDSDN.

This is an uncharacterized protein from Acanthamoeba polyphaga (Amoeba).